The sequence spans 502 residues: Cytochrome P450 2J3 (502 aa).

Position 448 (C448) interacts with heme.

Belongs to the cytochrome P450 family. The cofactor is heme. Abundantly expressed in heart and liver.

The protein localises to the endoplasmic reticulum membrane. It is found in the microsome membrane. It catalyses the reaction an organic molecule + reduced [NADPH--hemoprotein reductase] + O2 = an alcohol + oxidized [NADPH--hemoprotein reductase] + H2O + H(+). Functionally, this enzyme metabolizes arachidonic acid predominantly via a NADPH-dependent olefin epoxidation mainly to 14,15-, 11,12-, and 8,9-epoxyeicosatrienoic acids (EET). It also acts as an omega-1-hydroxylase by metabolizing arachidonic acid to 19-hydroxyeicosatetraenoic acid (19-OH-AA). The chain is Cytochrome P450 2J3 (Cyp2j3) from Rattus norvegicus (Rat).